A 1163-amino-acid chain; its full sequence is Voltage-gated inwardly rectifying potassium channel KCNH2 (1163 aa).

The Cytoplasmic portion of the chain corresponds to 1–405; it reads MPVRRGHVAP…RIHRWTILHY (405 aa). Positions 17 to 88 constitute a PAS domain; it reads TIIRKFEGQS…AAQIAQALLG (72 aa). The 53-residue stretch at 92–144 folds into the PAC domain; the sequence is RKVEIAFYRKDGSCFLCLVDVVPVKNEDGAVIMFILNFEVVMEKDMVGSPAHD. Residues 235–286 form a disordered region; that stretch reads VGPASASPVASIPGPHPSPRAQSLNPDASGSSCSLARTRSRESCASVRRASS. Residues Ser239 and Ser245 each carry the phosphoserine modification. Over residues 254 to 271 the composition is skewed to polar residues; that stretch reads RAQSLNPDASGSSCSLAR. Phosphoserine is present on residues Ser285, Ser286, Ser322, and Ser353. Residues 406-426 form a helical membrane-spanning segment; that stretch reads SPFKAVWDWLILLLVIYTAVF. The Extracellular portion of the chain corresponds to 427 to 452; the sequence is TPYSAAFLLKETEDGSQAPDCGYACQ. A helical membrane pass occupies residues 453 to 473; it reads PLAVVDLLVDIMFIVDILINF. Residues 474–497 lie on the Cytoplasmic side of the membrane; the sequence is RTTYVNANEEVVSHPGRIAVHYFK. A helical transmembrane segment spans residues 498–518; sequence GWFLIDMVAAIPFDLLIFGSG. The Extracellular segment spans residues 519 to 522; that stretch reads SEEL. Residues 523–543 form a helical; Voltage-sensor membrane-spanning segment; that stretch reads IGLLKTARLLRLVRVARKLDR. Over 544 to 549 the chain is Cytoplasmic; it reads YSEYGA. The chain crosses the membrane as a helical span at residues 550 to 570; the sequence is AVLFLLMCTFALIAHWLACIW. Over 571-613 the chain is Extracellular; that stretch reads YAIGNMEQPHMDSHIGWLHNLGDQIGKPYNSSGLGGPSIKDKY. Asn600 is a glycosylation site (N-linked (GlcNAc...) asparagine). Positions 614-634 form an intramembrane region, pore-forming; that stretch reads VTALYFTFSSLTSVGFGNVSP. The short motif at 626–631 is the Selectivity filter element; the sequence is SVGFGN. The Extracellular segment spans residues 635–640; the sequence is NTNSEK. The helical transmembrane segment at 641-661 threads the bilayer; sequence IFSICVMLIGSLMYASIFGNV. At 662-1163 the chain is on the cytoplasmic side; it reads SAIIQRLYSG…LHRHGSDPGS (502 aa). A cNMP-binding domain region spans residues 744–844; sequence PFRGATKGCL…IHRDDLLEVL (101 aa). Ser873 and Ser876 each carry phosphoserine. Disordered regions lie at residues 873–992, 1015–1043, and 1126–1163; these read SPSS…NPLS, ELPR…GDVE, and AGAP…DPGS. A compositionally biased stretch (basic residues) spans 885 to 894; that stretch reads RQRKRKLSFR. Low complexity predominate over residues 932-943; sequence GESPSSGPSSPE. Position 1018 is an omega-N-methylarginine (Arg1018). Residues 1039–1066 adopt a coiled-coil conformation; sequence RGDVESRLDALQRQLNRLETRLSADMAT. Ser1141 bears the Phosphoserine mark.

The protein belongs to the potassium channel family. H (Eag) (TC 1.A.1.20) subfamily. Kv11.1/KCNH2 sub-subfamily. The potassium channel is probably composed of a homo- or heterotetrameric complex of pore-forming alpha subunits that can associate with modulating beta subunits. Interacts with DNAJB12 and DNAJB14; chaperones DNAJB12 and DNAJB14 promote tetramerization. Heteromultimer with KCNH6/ERG2 and KCNH7/ERG3. Interacts with ALG10B. Forms a stable complex with KCNE1 or KCNE2, and that this heteromultimerization regulates Inward rectifier potassium channel activity. Interacts with CANX. The core-glycosylated, but not the fully glycosylated form interacts with RNF207. Interacts with NDFIP1 and NDFIP2; this interaction decreases the cell membrane expression by targeting KCNH2, through interaction with NEDD4L, for the degradation through the multivesicular bodies (MVBs)-lysosomal pathway. Post-translationally, phosphorylated on serine and threonine residues. Phosphorylation by PKA inhibits ion conduction. As to expression, highly expressed in brain and testis, slightly less so in heart, adrenal, retina and thymus. Detected at lower levels in lung, soleus, tibialis, and at very low levels in cornea and lens. A shorter transcript is detected in skeletal muscle. Found in pituitary.

The protein resides in the cell membrane. It catalyses the reaction K(+)(in) = K(+)(out). Pore-forming (alpha) subunit of voltage-gated inwardly rectifying potassium channel. Characterized by unusual gating kinetics by producing relatively small outward currents during membrane depolarization and large inward currents during subsequent repolarization which reflect a rapid inactivation during depolarization and quick recovery from inactivation but slow deactivation (closing) during repolarization. Channel properties are modulated by cAMP and subunit assembly. Forms a stable complex with KCNE1 or KCNE2, and that this heteromultimerization regulates inward rectifier potassium channel activity. The chain is Voltage-gated inwardly rectifying potassium channel KCNH2 from Rattus norvegicus (Rat).